The sequence spans 362 residues: 3-dehydroquinate synthase (362 aa).

Residues Asp71–Lys76, Gly105–Asp109, Thr129–Thr130, Lys142, Lys151, and Cys169–Thr172 each bind NAD(+). Zn(2+) contacts are provided by Glu184, His247, and His264.

Belongs to the sugar phosphate cyclases superfamily. Dehydroquinate synthase family. Co(2+) serves as cofactor. Zn(2+) is required as a cofactor. The cofactor is NAD(+).

The protein resides in the cytoplasm. The enzyme catalyses 7-phospho-2-dehydro-3-deoxy-D-arabino-heptonate = 3-dehydroquinate + phosphate. It functions in the pathway metabolic intermediate biosynthesis; chorismate biosynthesis; chorismate from D-erythrose 4-phosphate and phosphoenolpyruvate: step 2/7. In terms of biological role, catalyzes the conversion of 3-deoxy-D-arabino-heptulosonate 7-phosphate (DAHP) to dehydroquinate (DHQ). The protein is 3-dehydroquinate synthase of Shigella dysenteriae serotype 1 (strain Sd197).